A 270-amino-acid chain; its full sequence is GTP cyclohydrolase FolE2 2 (270 aa).

The protein belongs to the GTP cyclohydrolase IV family.

The catalysed reaction is GTP + H2O = 7,8-dihydroneopterin 3'-triphosphate + formate + H(+). The protein operates within cofactor biosynthesis; 7,8-dihydroneopterin triphosphate biosynthesis; 7,8-dihydroneopterin triphosphate from GTP: step 1/1. In terms of biological role, converts GTP to 7,8-dihydroneopterin triphosphate. The protein is GTP cyclohydrolase FolE2 2 of Dechloromonas aromatica (strain RCB).